The following is a 445-amino-acid chain: Phosphoglucosamine mutase (445 aa).

The Phosphoserine intermediate role is filled by S102. Residues S102, D240, D242, and D244 each coordinate Mg(2+). S102 bears the Phosphoserine mark.

The protein belongs to the phosphohexose mutase family. Mg(2+) is required as a cofactor. Activated by phosphorylation.

It catalyses the reaction alpha-D-glucosamine 1-phosphate = D-glucosamine 6-phosphate. Functionally, catalyzes the conversion of glucosamine-6-phosphate to glucosamine-1-phosphate. This Mycobacterium marinum (strain ATCC BAA-535 / M) protein is Phosphoglucosamine mutase.